We begin with the raw amino-acid sequence, 127 residues long: Aspartate 1-decarboxylase (127 aa).

S25 (schiff-base intermediate with substrate; via pyruvic acid) is an active-site residue. S25 bears the Pyruvic acid (Ser) mark. Substrate is bound at residue T57. The Proton donor role is filled by Y58. 73-75 (GAA) is a binding site for substrate.

Belongs to the PanD family. As to quaternary structure, heterooctamer of four alpha and four beta subunits. Pyruvate serves as cofactor. Is synthesized initially as an inactive proenzyme, which is activated by self-cleavage at a specific serine bond to produce a beta-subunit with a hydroxyl group at its C-terminus and an alpha-subunit with a pyruvoyl group at its N-terminus.

It localises to the cytoplasm. It carries out the reaction L-aspartate + H(+) = beta-alanine + CO2. Its pathway is cofactor biosynthesis; (R)-pantothenate biosynthesis; beta-alanine from L-aspartate: step 1/1. In terms of biological role, catalyzes the pyruvoyl-dependent decarboxylation of aspartate to produce beta-alanine. The chain is Aspartate 1-decarboxylase from Anoxybacillus flavithermus (strain DSM 21510 / WK1).